The following is a 412-amino-acid chain: Multifunctional CCA protein (412 aa).

Residues glycine 8 and arginine 11 each coordinate ATP. Positions 8 and 11 each coordinate CTP. The Mg(2+) site is built by aspartate 21 and aspartate 23. Arginine 91, arginine 137, and arginine 140 together coordinate ATP. The CTP site is built by arginine 91, arginine 137, and arginine 140. The region spanning 228–329 (TGIHTLMTLS…VKLFDSIDAW (102 aa)) is the HD domain.

This sequence belongs to the tRNA nucleotidyltransferase/poly(A) polymerase family. Bacterial CCA-adding enzyme type 1 subfamily. In terms of assembly, monomer. Can also form homodimers and oligomers. It depends on Mg(2+) as a cofactor. Ni(2+) is required as a cofactor.

The catalysed reaction is a tRNA precursor + 2 CTP + ATP = a tRNA with a 3' CCA end + 3 diphosphate. The enzyme catalyses a tRNA with a 3' CCA end + 2 CTP + ATP = a tRNA with a 3' CCACCA end + 3 diphosphate. Catalyzes the addition and repair of the essential 3'-terminal CCA sequence in tRNAs without using a nucleic acid template. Adds these three nucleotides in the order of C, C, and A to the tRNA nucleotide-73, using CTP and ATP as substrates and producing inorganic pyrophosphate. tRNA 3'-terminal CCA addition is required both for tRNA processing and repair. Also involved in tRNA surveillance by mediating tandem CCA addition to generate a CCACCA at the 3' terminus of unstable tRNAs. While stable tRNAs receive only 3'-terminal CCA, unstable tRNAs are marked with CCACCA and rapidly degraded. This is Multifunctional CCA protein from Shigella dysenteriae serotype 1 (strain Sd197).